The chain runs to 296 residues: Centromere protein O (296 aa).

Positions 17 to 105 form a coiled coil; that stretch reads VLAHLERLET…NMKAILQAYR (89 aa).

It belongs to the CENP-O/MCM21 family. In terms of assembly, component of the CENPA-CAD complex, composed of CENPI, CENPK, CENPL, CENPO, CENPP, CENPQ, CENPR and CENPS. The CENPA-CAD complex interacts with the CENPA-NAC complex, at least composed of CENPA, CENPC, CENPH, CENPM, CENPN, CENPT and CENPU.

The protein resides in the nucleus. It localises to the chromosome. It is found in the centromere. Its subcellular location is the kinetochore. Its function is as follows. Component of the CENPA-CAD (nucleosome distal) complex, a complex recruited to centromeres which is involved in assembly of kinetochore proteins, mitotic progression and chromosome segregation. May be involved in incorporation of newly synthesized CENPA into centromeres via its interaction with the CENPA-NAC complex. Modulates the kinetochore-bound levels of NDC80 complex. This chain is Centromere protein O (CENPO), found in Bos taurus (Bovine).